Here is a 270-residue protein sequence, read N- to C-terminus: 3-methyl-2-oxobutanoate hydroxymethyltransferase (270 aa).

Asp50 and Asp89 together coordinate Mg(2+). 3-methyl-2-oxobutanoate is bound by residues 50 to 51 (DS), Asp89, and Lys118. Glu120 lines the Mg(2+) pocket. Glu187 (proton acceptor) is an active-site residue.

Belongs to the PanB family. As to quaternary structure, homodecamer; pentamer of dimers. Mg(2+) serves as cofactor.

It is found in the cytoplasm. The catalysed reaction is 3-methyl-2-oxobutanoate + (6R)-5,10-methylene-5,6,7,8-tetrahydrofolate + H2O = 2-dehydropantoate + (6S)-5,6,7,8-tetrahydrofolate. Its pathway is cofactor biosynthesis; (R)-pantothenate biosynthesis; (R)-pantoate from 3-methyl-2-oxobutanoate: step 1/2. Catalyzes the reversible reaction in which hydroxymethyl group from 5,10-methylenetetrahydrofolate is transferred onto alpha-ketoisovalerate to form ketopantoate. This chain is 3-methyl-2-oxobutanoate hydroxymethyltransferase, found in Helicobacter pylori (strain ATCC 700392 / 26695) (Campylobacter pylori).